The chain runs to 296 residues: 4-hydroxy-tetrahydrodipicolinate synthase (296 aa).

Thr49 contributes to the pyruvate binding site. Tyr137 functions as the Proton donor/acceptor in the catalytic mechanism. Lys165 serves as the catalytic Schiff-base intermediate with substrate. Ile207 serves as a coordination point for pyruvate.

It belongs to the DapA family. Homotetramer; dimer of dimers.

It is found in the cytoplasm. The enzyme catalyses L-aspartate 4-semialdehyde + pyruvate = (2S,4S)-4-hydroxy-2,3,4,5-tetrahydrodipicolinate + H2O + H(+). The protein operates within amino-acid biosynthesis; L-lysine biosynthesis via DAP pathway; (S)-tetrahydrodipicolinate from L-aspartate: step 3/4. Catalyzes the condensation of (S)-aspartate-beta-semialdehyde [(S)-ASA] and pyruvate to 4-hydroxy-tetrahydrodipicolinate (HTPA). This chain is 4-hydroxy-tetrahydrodipicolinate synthase, found in Bradyrhizobium diazoefficiens (strain JCM 10833 / BCRC 13528 / IAM 13628 / NBRC 14792 / USDA 110).